The sequence spans 400 residues: Forkhead box protein A4-B (400 aa).

The segment at residues 119–213 is a DNA-binding region (fork-head); it reads KPPYSYISLI…ENGCYLRRQK (95 aa). Positions 218–234 are enriched in basic and acidic residues; it reads ERSKSGEGERKGNKPGD. The disordered stretch occupies residues 218 to 290; the sequence is ERSKSGEGER…VGFSPTSEQA (73 aa). Composition is skewed to polar residues over residues 249-258 and 267-277; these read DCSSSRSPQA and STGSSIHQATG.

Primarily expressed in the dorsal blastopore lip (Spemann organizer) of early gastrulae. At later stages, expressed in the dorsal mesoderm and the neural floor plate. In the dorsal mesoderm, expressed in the notochord but not in the presomitic mesoderm. Also expressed in the mid-brain area.

Its subcellular location is the nucleus. In terms of biological role, transcriptional repressor involved in embryonic nervous system development. Plays a role in the induction and patterning of the anterior-posterior neural axis. Involved in the establishment of floor plate differentiation from neural plate cells during gastrulation. Binds the anf1 promoter sequence to restrict expression of anf1 to the anterior of the neural plate, thereby patterning the forebrain. Can bind to the HNF-3-alpha DNA target sequence. Cooperates with t/bra in a dose-dependent manner to specify dorsal mesoderm formation, including notochord. May be involved in the dorso-ventral patterning of the mesoderm. Binds to DNA via the target sequence 5'-[GA]TAAA[TC]A-3', with 5'-GTAAATA-3' being the preferred binding site. This is Forkhead box protein A4-B (foxa4-b) from Xenopus laevis (African clawed frog).